The following is a 358-amino-acid chain: MAPQNLSTFCLLLLYLIGAVIAGRDFYKILGVPRSASIKDIKKAYRKLALQLHPDRNPDDPQAQEKFQDLGAAYEVLSDSEKRKQYDTYGEEGLKDGHQSSHGDIFSHFFGDFGFMFGGTPRQQDRNIPRGSDIIVDLEVTLEEVYAGNFVEVVRNKPVARQAPGKRKCNCRQEMRTTQLGPGRFQMTQEVVCDECPNVKLVNEERTLEVEIEPGVRDGMEYPFIGEGEPHVDGEPGDLRFRIKVVKHPIFERRGDDLYTNVTISLVESLVGFEMDITHLDGHKVHISRDKITRPGAKLWKKGEGLPNFDNNNIKGSLIITFDVDFPKEQLTEEAREGIKQLLKQGSVQKVYNGLQGY.

Residues 1-22 (MAPQNLSTFCLLLLYLIGAVIA) form the signal peptide. The J domain occupies 25-90 (DFYKILGVPR…EKRKQYDTYG (66 aa)). A Phosphothreonine modification is found at T188. N261 carries N-linked (GlcNAc...) asparagine glycosylation.

In terms of assembly, part of a large chaperone multiprotein complex comprising DNAJB11, HSP90B1, HSPA5, HYOU, PDIA2, PDIA4, PDIA6, PPIB, SDF2L1, UGGT1 and very small amounts of ERP29, but not, or at very low levels, CALR nor CANX. Binds to denatured substrates in an ATP-independent manner. Interacts via the J domain with HSPA5 in an ATP-dependent manner. Contains high-mannose Endo H-sensitive carbohydrates. Post-translationally, cys-169, Cys-171, Cys-193 and Cys-196 form intramolecular disulfide bonds. The preferential partner for each Cys is not known. In terms of processing, thr-188 was reported to be phosphorylated upon DNA damage by ATM or ATR; however as this position has been shown to be in the ER lumen, the in vivo relevance is not proven. In terms of tissue distribution, widely expressed.

It localises to the endoplasmic reticulum lumen. As a co-chaperone for HSPA5 it is required for proper folding, trafficking or degradation of proteins. Binds directly to both unfolded proteins that are substrates for ERAD and nascent unfolded peptide chains, but dissociates from the HSPA5-unfolded protein complex before folding is completed. May help recruiting HSPA5 and other chaperones to the substrate. Stimulates HSPA5 ATPase activity. It is necessary for maturation and correct trafficking of PKD1. The protein is DnaJ homolog subfamily B member 11 (DNAJB11) of Homo sapiens (Human).